The chain runs to 407 residues: Phosphopentomutase (407 aa).

Mn(2+) contacts are provided by Asp10, Asp306, His311, Asp347, His348, and His359.

It belongs to the phosphopentomutase family. The cofactor is Mn(2+).

It localises to the cytoplasm. It carries out the reaction 2-deoxy-alpha-D-ribose 1-phosphate = 2-deoxy-D-ribose 5-phosphate. It catalyses the reaction alpha-D-ribose 1-phosphate = D-ribose 5-phosphate. The protein operates within carbohydrate degradation; 2-deoxy-D-ribose 1-phosphate degradation; D-glyceraldehyde 3-phosphate and acetaldehyde from 2-deoxy-alpha-D-ribose 1-phosphate: step 1/2. Functionally, isomerase that catalyzes the conversion of deoxy-ribose 1-phosphate (dRib-1-P) and ribose 1-phosphate (Rib-1-P) to deoxy-ribose 5-phosphate (dRib-5-P) and ribose 5-phosphate (Rib-5-P), respectively. The polypeptide is Phosphopentomutase (Salmonella schwarzengrund (strain CVM19633)).